The primary structure comprises 343 residues: General transcription and DNA repair factor IIH subunit TFB6 (343 aa).

A Phosphotyrosine modification is found at Y69. A phosphothreonine mark is found at T71 and T84. S104, S105, S108, and S342 each carry phosphoserine.

In terms of assembly, component of the general transcription factor TFIIH, composed of a 7-subunit TFIIH core complex composed of XPB/SSL2, XPD/RAD3, SSL1, TFB1, TFB2, TFB4 and TFB5 which is active in NER; the 3-subunit CTD-kinase module TFIIK composed of CCL1, KIN28, and TFB3 which is active in transcription; as well as TFB6 that regulates SSL2 association with the complex. In terms of processing, phosphorylation leads the dissociation of from SSL2.

The protein resides in the cytoplasm. Its subcellular location is the nucleus. Its function is as follows. Component of the general transcription and DNA repair factor IIH (TFIIH) core complex, which is involved in general and transcription-coupled nucleotide excision repair (NER) of damaged DNA and, when complexed to TFIIK, in RNA transcription by RNA polymerase II. In NER, TFIIH acts by opening DNA around the lesion to allow the excision of the damaged oligonucleotide and its replacement by a new DNA fragment. In transcription, TFIIH has an essential role in transcription initiation. When the pre-initiation complex (PIC) has been established, TFIIH is required for promoter opening and promoter escape. Phosphorylation of the C-terminal tail (CTD) of the largest subunit of RNA polymerase II by the kinase module TFIIK controls the initiation of transcription. TFB6 facilitates dissociation of the SSL2 helicase from TFIIH after transcription initiation. The chain is General transcription and DNA repair factor IIH subunit TFB6 from Saccharomyces cerevisiae (strain ATCC 204508 / S288c) (Baker's yeast).